The primary structure comprises 447 residues: Beclin-2 (447 aa).

The stretch at 169 to 228 (EALHAELCAELSSLEQEEARLTQELEDLDGHHARVAAELRAAQAESKELYKQHEQHRVEY) forms a coiled coil. Positions 186-256 (EARLTQELED…NQLTYALSQQ (71 aa)) are required for homodimer formation.

This sequence belongs to the beclin family. In terms of assembly, homodimer (via coiled-coil domain). Interacts (via coiled-coil domain) with ATG14 (via coiled-coil domain); this interaction is tighter than BECN2 self-association. Interacts with AMBRA1, UVRAG and PIK3C3/VPS34; these interactions are not disrupted by starvation. Does not interact with RUBCN. Interacts (via N-terminus) with GPRASP1/GASP1; the interaction is direct. As to expression, expressed in brain, skeletal muscle, placenta, thymus and uterus. Expressed at a lower level in liver, testis, stomach, and 17-day-old embryos.

The protein resides in the cytoplasm. Involved in 2 distinct lysosomal degradation pathways: acts as a regulator of autophagy and as a regulator of G-protein coupled receptors turnover. Regulates degradation in lysosomes of a variety of G-protein coupled receptors via its interaction with GPRASP1/GASP1. This chain is Beclin-2, found in Mus musculus (Mouse).